The following is a 269-amino-acid chain: Regulatory protein RecX (269 aa).

The protein belongs to the RecX family.

Its subcellular location is the cytoplasm. Functionally, modulates RecA activity. The protein is Regulatory protein RecX of Geobacillus kaustophilus (strain HTA426).